A 454-amino-acid polypeptide reads, in one-letter code: GTPase Obg (454 aa).

The 158-residue stretch at 2 to 159 (SDFVDEAVLH…VDIRLELKTI (158 aa)) folds into the Obg domain. Residues 60-87 (YQRRPHRKAENGAPGQGSNRSGASGADL) are disordered. The region spanning 160–335 (ADVGLVGFPS…LAYALGEQVA (176 aa)) is the OBG-type G domain. Residues 166–173 (GFPSAGKS), 191–195 (FTTLV), 212–215 (DVPG), 287–290 (NKID), and 316–318 (SAA) each bind GTP. Serine 173 and threonine 193 together coordinate Mg(2+). The 83-residue stretch at 353-435 (PREIGEIPFQ…DNPVVFDWDP (83 aa)) folds into the OCT domain.

It belongs to the TRAFAC class OBG-HflX-like GTPase superfamily. OBG GTPase family. In terms of assembly, monomer. Requires Mg(2+) as cofactor.

Its subcellular location is the cytoplasm. An essential GTPase which binds GTP, GDP and possibly (p)ppGpp with moderate affinity, with high nucleotide exchange rates and a fairly low GTP hydrolysis rate. Plays a role in control of the cell cycle, stress response, ribosome biogenesis and in those bacteria that undergo differentiation, in morphogenesis control. This Thermobifida fusca (strain YX) protein is GTPase Obg.